A 504-amino-acid chain; its full sequence is ATP synthase subunit alpha (504 aa).

Position 169 to 176 (169 to 176 (GDRKTGKT)) interacts with ATP.

It belongs to the ATPase alpha/beta chains family. F-type ATPases have 2 components, CF(1) - the catalytic core - and CF(0) - the membrane proton channel. CF(1) has five subunits: alpha(3), beta(3), gamma(1), delta(1), epsilon(1). CF(0) has three main subunits: a(1), b(2) and c(9-12). The alpha and beta chains form an alternating ring which encloses part of the gamma chain. CF(1) is attached to CF(0) by a central stalk formed by the gamma and epsilon chains, while a peripheral stalk is formed by the delta and b chains.

It is found in the cell membrane. The catalysed reaction is ATP + H2O + 4 H(+)(in) = ADP + phosphate + 5 H(+)(out). Produces ATP from ADP in the presence of a proton gradient across the membrane. The alpha chain is a regulatory subunit. In Leuconostoc citreum (strain KM20), this protein is ATP synthase subunit alpha.